The primary structure comprises 316 residues: Ribosomal RNA small subunit methyltransferase H (316 aa).

S-adenosyl-L-methionine is bound by residues 35–37 (AGH), D55, F84, D105, and Q112.

The protein belongs to the methyltransferase superfamily. RsmH family.

It localises to the cytoplasm. It carries out the reaction cytidine(1402) in 16S rRNA + S-adenosyl-L-methionine = N(4)-methylcytidine(1402) in 16S rRNA + S-adenosyl-L-homocysteine + H(+). In terms of biological role, specifically methylates the N4 position of cytidine in position 1402 (C1402) of 16S rRNA. This Streptococcus pneumoniae (strain JJA) protein is Ribosomal RNA small subunit methyltransferase H.